We begin with the raw amino-acid sequence, 263 residues long: Endonuclease 8 (263 aa).

The active-site Schiff-base intermediate with DNA is Pro-2. Glu-3 functions as the Proton donor in the catalytic mechanism. Lys-53 serves as the catalytic Proton donor; for beta-elimination activity. DNA is bound by residues Gln-70, Arg-125, and Asn-169. Residues Lys-229–Arg-263 form an FPG-type zinc finger. Arg-253 functions as the Proton donor; for delta-elimination activity in the catalytic mechanism.

It belongs to the FPG family. It depends on Zn(2+) as a cofactor.

It catalyses the reaction 2'-deoxyribonucleotide-(2'-deoxyribose 5'-phosphate)-2'-deoxyribonucleotide-DNA = a 3'-end 2'-deoxyribonucleotide-(2,3-dehydro-2,3-deoxyribose 5'-phosphate)-DNA + a 5'-end 5'-phospho-2'-deoxyribonucleoside-DNA + H(+). Its function is as follows. Involved in base excision repair of DNA damaged by oxidation or by mutagenic agents. Acts as a DNA glycosylase that recognizes and removes damaged bases. Has a preference for oxidized pyrimidines, such as thymine glycol, 5,6-dihydrouracil and 5,6-dihydrothymine. Has AP (apurinic/apyrimidinic) lyase activity and introduces nicks in the DNA strand. Cleaves the DNA backbone by beta-delta elimination to generate a single-strand break at the site of the removed base with both 3'- and 5'-phosphates. The chain is Endonuclease 8 from Pectobacterium carotovorum subsp. carotovorum (strain PC1).